The primary structure comprises 246 residues: Granzyme H (246 aa).

An N-terminal signal peptide occupies residues 1–18 (MQPFLLLLAFLLTPGAGT). The propeptide at 19–20 (EE) is activation peptide. The region spanning 21–244 (IIGGHEAKPH…FLPWIKRTMK (224 aa)) is the Peptidase S1 domain. The interval 46 to 48 (RKR) is mediates the preference for acidic residues at the P3' and P4' sites. Cysteines 49 and 65 form a disulfide. The Charge relay system role is filled by H64. Residues N71 and N104 are each glycosylated (N-linked (GlcNAc...) asparagine). D108 functions as the Charge relay system in the catalytic mechanism. Intrachain disulfides connect C142/C208 and C172/C187. N-linked (GlcNAc...) asparagine glycosylation occurs at N179. The active-site Charge relay system is the S202.

The protein belongs to the peptidase S1 family. Granzyme subfamily. In terms of tissue distribution, constitutively expressed in NK cells.

It is found in the cytolytic granule. Its activity is regulated as follows. Inhibited by SERPINB1. Functionally, cytotoxic chymotrypsin-like serine protease with preference for bulky and aromatic residues at the P1 position and acidic residues at the P3' and P4' sites. Probably necessary for target cell lysis in cell-mediated immune responses. Participates in the antiviral response via direct cleavage of several proteins essential for viral replication. The protein is Granzyme H (GZMH) of Homo sapiens (Human).